The primary structure comprises 188 residues: Adenine phosphoribosyltransferase (188 aa).

Belongs to the purine/pyrimidine phosphoribosyltransferase family. Homodimer.

The protein resides in the cytoplasm. It catalyses the reaction AMP + diphosphate = 5-phospho-alpha-D-ribose 1-diphosphate + adenine. The protein operates within purine metabolism; AMP biosynthesis via salvage pathway; AMP from adenine: step 1/1. Catalyzes a salvage reaction resulting in the formation of AMP, that is energically less costly than de novo synthesis. The chain is Adenine phosphoribosyltransferase from Burkholderia lata (strain ATCC 17760 / DSM 23089 / LMG 22485 / NCIMB 9086 / R18194 / 383).